The chain runs to 344 residues: MRNVQAQPLVSPTEPMIDPFGRAVTYLRVSVTDRCDFRCTYCMAEHMTFLPKKDLLTLEELDRLCSVFIEKGVRKLRLTGGEPLVRKNIMHLIGNLSRHLKSGALDELTLTTNGSQLARFAGELADCGVRRINVSLDTLNPEKFRTITRWGDLSRVLEGIDAAQKAGIHVKINAVALKDFNDAEIPELIRWAHGRGMDVTLIETMPMGEIEFDRTDQYLPLSQVRADLASQFTLADIPYRTGGPARYVTISETGGRLGFITPMTHNFCESCNRVRLTCTGMLYMCLGQNDDADLRKALRESESDEHLSQAIDEAISRKPKGHDFIIDREHNRPSVARHMSLTGG.

One can recognise a Radical SAM core domain in the interval 19 to 245; that stretch reads PFGRAVTYLR…DIPYRTGGPA (227 aa). Residue Arg28 coordinates GTP. [4Fe-4S] cluster-binding residues include Cys35 and Cys39. Residue Tyr41 coordinates S-adenosyl-L-methionine. Cys42 contacts [4Fe-4S] cluster. Arg77 contacts GTP. Residue Gly81 coordinates S-adenosyl-L-methionine. Residue Thr111 participates in GTP binding. Position 135 (Ser135) interacts with S-adenosyl-L-methionine. Lys171 provides a ligand contact to GTP. Met205 is a binding site for S-adenosyl-L-methionine. 2 residues coordinate [4Fe-4S] cluster: Cys268 and Cys271. 273-275 serves as a coordination point for GTP; the sequence is RVR. Residue Cys285 coordinates [4Fe-4S] cluster.

Belongs to the radical SAM superfamily. MoaA family. Monomer and homodimer. Requires [4Fe-4S] cluster as cofactor.

It catalyses the reaction GTP + AH2 + S-adenosyl-L-methionine = (8S)-3',8-cyclo-7,8-dihydroguanosine 5'-triphosphate + 5'-deoxyadenosine + L-methionine + A + H(+). Its pathway is cofactor biosynthesis; molybdopterin biosynthesis. Functionally, catalyzes the cyclization of GTP to (8S)-3',8-cyclo-7,8-dihydroguanosine 5'-triphosphate. This is GTP 3',8-cyclase from Brucella canis (strain ATCC 23365 / NCTC 10854 / RM-666).